Here is a 966-residue protein sequence, read N- to C-terminus: Integrator complex subunit 7 (966 aa).

S338 and S809 each carry phosphoserine. The interval L941–F966 is disordered.

This sequence belongs to the Integrator subunit 7 family. Component of the Integrator complex, composed of core subunits INTS1, INTS2, INTS3, INTS4, INTS5, INTS6, INTS7, INTS8, INTS9/RC74, INTS10, INTS11/CPSF3L, INTS12, INTS13, INTS14 and INTS15. The core complex associates with protein phosphatase 2A subunits PPP2CA and PPP2R1A, to form the Integrator-PP2A (INTAC) complex. Interacts with NABP2.

The protein localises to the nucleus. The protein resides in the chromosome. It localises to the cytoplasm. In terms of biological role, component of the integrator complex, a multiprotein complex that terminates RNA polymerase II (Pol II) transcription in the promoter-proximal region of genes. The integrator complex provides a quality checkpoint during transcription elongation by driving premature transcription termination of transcripts that are unfavorably configured for transcriptional elongation: the complex terminates transcription by (1) catalyzing dephosphorylation of the C-terminal domain (CTD) of Pol II subunit POLR2A/RPB1 and SUPT5H/SPT5, (2) degrading the exiting nascent RNA transcript via endonuclease activity and (3) promoting the release of Pol II from bound DNA. The integrator complex is also involved in terminating the synthesis of non-coding Pol II transcripts, such as enhancer RNAs (eRNAs), small nuclear RNAs (snRNAs), telomerase RNAs and long non-coding RNAs (lncRNAs). May be not involved in the recruitment of cytoplasmic dynein to the nuclear envelope by different components of the INT complex. Plays a role in DNA damage response (DDR) signaling during the S phase. In Mus musculus (Mouse), this protein is Integrator complex subunit 7 (Ints7).